Consider the following 125-residue polypeptide: Calcitonin receptor-stimulating peptide 1 (125 aa).

A signal peptide spans 1 to 25 (MGFWKFPPFLVLSILVLYQAGMFHA). Residues 26 to 77 (APFRSVFDGRFDPATLDEEESRLLLAAMVNDYEQMRTRESEKAQKTEGSRIQ) constitute a propeptide that is removed on maturation. Cysteine 81 and cysteine 86 are joined by a disulfide.

This sequence belongs to the calcitonin family.

Its subcellular location is the secreted. Functionally, stimulates cAMP production via the calcitonin receptor (CT) but not via the CT-like (CL) receptor. In Ovis aries (Sheep), this protein is Calcitonin receptor-stimulating peptide 1 (CRSP1).